A 178-amino-acid chain; its full sequence is MSRIGNKVITLPAGVEITNNDNVVTVKGPKGELTREFNKNIEIKVEGNEVTLHRPNDSKENKTIHGTSRANLNNMVVGVSEGFKKELEMHGVGYRAQLQGTKLVLSVGKSHQDEVEAPEGITFEVPSATSIVVSGINKEVVGQTAAYIRSLRSPEPYKGKGIRYVGEYVRRKEGKTGK.

It belongs to the universal ribosomal protein uL6 family. Part of the 50S ribosomal subunit.

Functionally, this protein binds to the 23S rRNA, and is important in its secondary structure. It is located near the subunit interface in the base of the L7/L12 stalk, and near the tRNA binding site of the peptidyltransferase center. This is Large ribosomal subunit protein uL6 from Streptococcus thermophilus (strain CNRZ 1066).